A 315-amino-acid polypeptide reads, in one-letter code: Ribosomal RNA small subunit methyltransferase H (315 aa).

S-adenosyl-L-methionine-binding positions include 37-39 (GGH), D57, F83, D105, and Q112. A disordered region spans residues 296-315 (EVKANPRSRSAVMRVAEKVR).

Belongs to the methyltransferase superfamily. RsmH family.

It is found in the cytoplasm. The catalysed reaction is cytidine(1402) in 16S rRNA + S-adenosyl-L-methionine = N(4)-methylcytidine(1402) in 16S rRNA + S-adenosyl-L-homocysteine + H(+). Specifically methylates the N4 position of cytidine in position 1402 (C1402) of 16S rRNA. The sequence is that of Ribosomal RNA small subunit methyltransferase H from Stutzerimonas stutzeri (strain A1501) (Pseudomonas stutzeri).